The following is a 237-amino-acid chain: MKKHRLPDTELARIAPLAPDARRKALLKFKNGFPDFSYEPTRRRLPELTNAQPSLLSLGDTEWSKIESGLKRLKNEKEAASNIEVAELLYNFIREEKYIAVMEPFGKLQLGAGVAISYWSDAIFFGPDGPTIFGFDFRRAGGFNDSARRFAFSAQHEHIRQRGDDYATAKLGLVQFPALRNGTRKVRVEFADQVELIPYDELIQMARETYSVWFEILEQREDEARKTGTGGSWWDGD.

Interacts with cognate antitoxin SocA and with beta sliding clamp (dnaN). In terms of processing, degraded by ClpXP, recognition of SocB by ClpX requires SocA.

It localises to the cytoplasm. In terms of biological role, toxic component of an atypical type II toxin-antitoxin (TA) system. Upon overexpression in the absence of its cognate antitoxin SocA, leads to inhibition of colony formation, cellular filamentation, incomplete DNA replication and induction of the SOS response. Exercises toxicity by binding the beta sliding clamp (dnaN), blocking DNA replication and leading to premature replication fork collapse and incomplete cell division. Unlike most type II TA systems, the SocB toxin is unstable and targeted by its cognate antitoxin SocA for degradation by ClpXP. Not toxic upon expression in E.coli. In Caulobacter vibrioides (strain NA1000 / CB15N) (Caulobacter crescentus), this protein is DNA replication inhibitor toxin SocB.